The chain runs to 302 residues: Phospho-N-acetylmuramoyl-pentapeptide-transferase (302 aa).

Transmembrane regions (helical) follow at residues 1-21, 42-62, 68-88, 123-143, 154-174, 178-198, 204-224, 229-249, and 279-299; these read MIAA…KLFR, GTPT…GMIS, VLLG…LSVV, FFGF…LVIV, GLDG…WFFL, GVSE…LVFN, IFMG…VSVL, FYLV…ILQV, and IVAV…EIFG.

This sequence belongs to the glycosyltransferase 4 family. MraY subfamily. Requires Mg(2+) as cofactor.

The protein localises to the cell inner membrane. The enzyme catalyses UDP-N-acetyl-alpha-D-muramoyl-L-alanyl-gamma-D-glutamyl-meso-2,6-diaminopimeloyl-D-alanyl-D-alanine + di-trans,octa-cis-undecaprenyl phosphate = di-trans,octa-cis-undecaprenyl diphospho-N-acetyl-alpha-D-muramoyl-L-alanyl-D-glutamyl-meso-2,6-diaminopimeloyl-D-alanyl-D-alanine + UMP. The protein operates within cell wall biogenesis; peptidoglycan biosynthesis. In terms of biological role, catalyzes the initial step of the lipid cycle reactions in the biosynthesis of the cell wall peptidoglycan: transfers peptidoglycan precursor phospho-MurNAc-pentapeptide from UDP-MurNAc-pentapeptide onto the lipid carrier undecaprenyl phosphate, yielding undecaprenyl-pyrophosphoryl-MurNAc-pentapeptide, known as lipid I. In Thermotoga petrophila (strain ATCC BAA-488 / DSM 13995 / JCM 10881 / RKU-1), this protein is Phospho-N-acetylmuramoyl-pentapeptide-transferase.